A 187-amino-acid chain; its full sequence is Virulence protein ATR13 (187 aa).

An N-terminal signal peptide occupies residues 1–19; it reads MRLVHAVLLPGIIVFVSNG. Positions 38–41 match the RxLR motif; that stretch reads RQLR. The tract at residues 50 to 92 is leucine heptad repeat region; sequence LSRASFGLGKAQDPLDKFFRKIINSRKPIETSYSAKGIHEKII. 4 repeat units span residues 93–103, 104–114, 115–125, and 126–136. Residues 93-136 form a 4 X 11 AA tandem repeats region; that stretch reads KAYDRHVFESKKAHDRHVSKSKKAHGRHVSKSKMAHDRHVSKSE. The disordered stretch occupies residues 104–136; the sequence is KAHDRHVSKSKKAHGRHVSKSKMAHDRHVSKSE. The span at 111-125 shows a compositional bias: basic residues; the sequence is SKSKKAHGRHVSKSK. Positions 126–136 are enriched in basic and acidic residues; that stretch reads MAHDRHVSKSE. Residues 137–187 are highly variable C-terminus domain; the sequence is KAPIQYASVADYLKKIYPGTDIERIVSTLKRHDEVGAKDLGAKLQTAVASQ.

It belongs to the RxLR effector family.

Its subcellular location is the secreted. It is found in the host nucleus. The protein localises to the host nucleolus. The protein resides in the host cytoplasm. Its function is as follows. Secreted effector that acts as an elicitor of hypersensitive response (HR) specifically on plants carrying defense protein RPP13. Recognition of ATR13 by RPP13 initiates defense responses that are effective against oomycete, bacterial and viral pathogens. Due to high polymorphism, ATR13-Emoy2 does not recognize RPP13-Nd, the RPP13 defense protein from Arabidopsis thaliana ecotype Niederzenz. ATR13-Emoy2 is recognized by RPP13 variants RPP13-UKID44, RPP13-UKID65 and RPP13-UKID71. The chain is Virulence protein ATR13 from Hyaloperonospora arabidopsidis (strain Emoy2) (Downy mildew agent).